We begin with the raw amino-acid sequence, 133 residues long: Small ribosomal subunit protein uS8 (133 aa).

Belongs to the universal ribosomal protein uS8 family. As to quaternary structure, part of the 30S ribosomal subunit. Contacts proteins S5 and S12.

Its function is as follows. One of the primary rRNA binding proteins, it binds directly to 16S rRNA central domain where it helps coordinate assembly of the platform of the 30S subunit. The protein is Small ribosomal subunit protein uS8 of Prochlorococcus marinus (strain SARG / CCMP1375 / SS120).